We begin with the raw amino-acid sequence, 288 residues long: Phenazine biosynthesis-like domain-containing protein (288 aa).

The active site involves E46.

Belongs to the PhzF family. As to quaternary structure, interacts with UNRIP/MAWD.

In Rattus norvegicus (Rat), this protein is Phenazine biosynthesis-like domain-containing protein (Pbld).